Consider the following 128-residue polypeptide: Holo-[acyl-carrier-protein] synthase (128 aa).

Mg(2+) contacts are provided by aspartate 7 and glutamate 55.

The protein belongs to the P-Pant transferase superfamily. AcpS family. Mg(2+) is required as a cofactor.

The protein localises to the cytoplasm. The enzyme catalyses apo-[ACP] + CoA = holo-[ACP] + adenosine 3',5'-bisphosphate + H(+). In terms of biological role, transfers the 4'-phosphopantetheine moiety from coenzyme A to a Ser of acyl-carrier-protein. In Moorella thermoacetica (strain ATCC 39073 / JCM 9320), this protein is Holo-[acyl-carrier-protein] synthase.